The following is a 419-amino-acid chain: Tyrosine--tRNA ligase 2 (419 aa).

Y34 provides a ligand contact to L-tyrosine. Positions 39-48 match the 'HIGH' region motif; sequence PTGDSMHIGH. Residues Y168 and Q172 each coordinate L-tyrosine. A 'KMSKS' region motif is present at residues 230–234; it reads KFGKS. Residue K233 participates in ATP binding. One can recognise an S4 RNA-binding domain in the interval 352 to 418; the sequence is KNIVEWLVDL…GKKNYSLVKL (67 aa).

This sequence belongs to the class-I aminoacyl-tRNA synthetase family. TyrS type 1 subfamily. In terms of assembly, homodimer.

It localises to the cytoplasm. The catalysed reaction is tRNA(Tyr) + L-tyrosine + ATP = L-tyrosyl-tRNA(Tyr) + AMP + diphosphate + H(+). In terms of biological role, catalyzes the attachment of tyrosine to tRNA(Tyr) in a two-step reaction: tyrosine is first activated by ATP to form Tyr-AMP and then transferred to the acceptor end of tRNA(Tyr). The polypeptide is Tyrosine--tRNA ligase 2 (Bacillus cereus (strain ATCC 10987 / NRS 248)).